The sequence spans 249 residues: GTP cyclohydrolase III (249 aa).

The protein belongs to the archaeal-type GTP cyclohydrolase family.

The catalysed reaction is GTP + 3 H2O = 2-amino-5-formylamino-6-(5-phospho-D-ribosylamino)pyrimidin-4(3H)-one + 2 phosphate + 2 H(+). Its function is as follows. Catalyzes the formation of 2-amino-5-formylamino-6-ribofuranosylamino-4(3H)-pyrimidinone ribonucleotide monophosphate and inorganic phosphate from GTP. Also has an independent pyrophosphate phosphohydrolase activity. The polypeptide is GTP cyclohydrolase III (Methanothermobacter thermautotrophicus (strain ATCC 29096 / DSM 1053 / JCM 10044 / NBRC 100330 / Delta H) (Methanobacterium thermoautotrophicum)).